The following is a 335-amino-acid chain: Methyltransferase pgmE (335 aa).

Belongs to the methyltransferase superfamily.

The protein operates within pigment biosynthesis. It participates in secondary metabolite biosynthesis. Its function is as follows. Methyltransferase; part of the gene cluster that mediates the biosynthesis of pleosporalin A, ascomycone A, as well as a third cryptic naphthoquinone derived pigment, all responsible for the coloration of conidia. Essential for the production of pleosporalin A, but not the 2 other final products. The pathway begins with the biosynthesis of the cyclized heptaketide 3-acetonyl-1,6,8-trihydroxy-2-naphthaldehyde by the NR-PKS pgmA. The C-6 hydroxyl group is further methylated by the O-methyltransferase pgmB to yield fusarubinaldehyde which is in turn oxidized by the cytochrome P450 monooxygenase pgmC at C-9. The C-1 hydroxyl group is then methylated spontaneously. Although pgmE, pgmD and pgmH are essential for the production of pleosporalin A, it is not the case for the 2 other final products and it remains difficult to assign a specific function to each enzyme. PgmF and pgmG seem not to be involved in pigment biosynthesis although they were regulated by the cluster-specific transcription factor pgmR. This Aspergillus terreus protein is Methyltransferase pgmE.